The primary structure comprises 597 residues: Protein GRISEA (597 aa).

Residues 1 to 41 constitute a DNA-binding region (copper-fist); the sequence is MPIINGQKMACGPCIRGHRSTKCNHYNERVMVPVRKPGRPL. Residues Cys11, Cys14, Cys23, and His25 each coordinate Zn(2+). Disordered stretches follow at residues 70–115, 233–352, 407–428, and 467–541; these read PAGT…ASRR, AFVD…PGFG, SRPP…NGNN, and SPNS…SPAL. The segment covering 92-103 has biased composition (polar residues); the sequence is SPASRTSSNRVT. Residues 104 to 115 show a composition bias toward low complexity; sequence KSGSGSKSASRR. Residues 269–281 show a composition bias toward gly residues; sequence GGSGGGGCCGGGK. The span at 287–314 shows a compositional bias: pro residues; it reads QAPPPVPAPLPTPPQQQMPNIMPPPQPQ. The span at 469–495 shows a compositional bias: low complexity; it reads NSSHGNSGSADSSANASPSANPLNLAS. Residues 521–530 show a composition bias toward polar residues; that stretch reads ANESDGSSNA.

It is found in the nucleus. In terms of biological role, copper-sensing transcription factor that regulates copper uptake by transactivation of Ctr3, a high affinity copper permease. Binds to the palindromic UAS sequence 5'-TGTTGCTCANNNNAGAGCAACT-3'. Also transactivates Sod2, a mitochondrial manganese superoxide dismutase through the palindromic UAS sequence 5'-GTTTGCTCA-3' with 352 bp separating the two inverted repeats. Loss of function indirectly leads to rearrangement of mitochondrial DNA associated with senescence in wild-type strains. In Podospora anserina (Pleurage anserina), this protein is Protein GRISEA.